Here is a 151-residue protein sequence, read N- to C-terminus: Sec-independent protein translocase protein TatB (151 aa).

The helical transmembrane segment at M1–G21 threads the bilayer. Basic and acidic residues-rich tracts occupy residues K87–R99 and E122–A132. Residues K87–S151 form a disordered region. Residues A134–S151 are compositionally biased toward low complexity.

The protein belongs to the TatB family. As to quaternary structure, the Tat system comprises two distinct complexes: a TatABC complex, containing multiple copies of TatA, TatB and TatC subunits, and a separate TatA complex, containing only TatA subunits. Substrates initially bind to the TatABC complex, which probably triggers association of the separate TatA complex to form the active translocon.

It is found in the cell inner membrane. In terms of biological role, part of the twin-arginine translocation (Tat) system that transports large folded proteins containing a characteristic twin-arginine motif in their signal peptide across membranes. Together with TatC, TatB is part of a receptor directly interacting with Tat signal peptides. TatB may form an oligomeric binding site that transiently accommodates folded Tat precursor proteins before their translocation. The sequence is that of Sec-independent protein translocase protein TatB from Marinobacter nauticus (strain ATCC 700491 / DSM 11845 / VT8) (Marinobacter aquaeolei).